The chain runs to 110 residues: Disintegrin jerdostatin (110 aa).

The signal sequence occupies residues 1–20; that stretch reads MIQVLLVTICLAVFPYQVSS. Positions 21–67 are excised as a propeptide; it reads KTLKSGSVNEYEVVNPGTVTGLPKGAVKQPEKKHEPMKGNTLQKLPL. Positions 27–110 constitute a Disintegrin domain; sequence SVNEYEVVNP…CECPSYPGNG (84 aa). Cystine bridges form between cysteine 68/cysteine 77, cysteine 73/cysteine 96, cysteine 74/cysteine 101, and cysteine 86/cysteine 103. Residues 88-90 carry the Cell attachment site; atypical (RTS) motif; the sequence is RTS.

It belongs to the disintegrin family. Short disintegrin subfamily. Monomer. In terms of processing, two conformers are found, they may differ by their disulfide bond connectivities. Conformer 2 is 33 times less active than conformer 1. Conformer 2 may represent a non-native protein. The C-terminal dipeptide may be post-translationally removed, as seen in disintegrins that possess a KTS integrin-binding motif. As to expression, expressed by the venom gland.

The protein localises to the secreted. Its function is as follows. Recombinant protein inhibits the adhesion of alpha-1/beta-1-K562 (ITGA1/ITGB1) cells to collagen IV with an IC(50) of 80 nM. The protein is Disintegrin jerdostatin of Protobothrops jerdonii (Jerdon's pitviper).